The following is a 317-amino-acid chain: MTDKLTSLRQLTTVVADTGDIAAMKQYQPQDATTNPSLILNAAQIPEYRKLIDDAIAWARAQSGDRAQQIVDASDKLAVNIGLEILKLIPGRISTEVDARLSYDTEASVAKAKRLIKLYNDAGISNDRILIKLASTWQGIRAAERLEKEGINCNLTLLFSFAQARACAEAGVFLISPFVGRILDWHKANGGKSEFAPAEDPGVISVTEIYNYYKQHGYETVVMGASFRNVGEILELAGCDRLTISPPLLKELSESTGNVERKLADQGEIKARPARMSEAEFYWQHNQDPMAVEKLADGIRKFAVDQGKLESMIGALL.

Lys-132 functions as the Schiff-base intermediate with substrate in the catalytic mechanism.

Belongs to the transaldolase family. Type 1 subfamily. As to quaternary structure, homodimer.

The protein resides in the cytoplasm. It catalyses the reaction D-sedoheptulose 7-phosphate + D-glyceraldehyde 3-phosphate = D-erythrose 4-phosphate + beta-D-fructose 6-phosphate. The protein operates within carbohydrate degradation; pentose phosphate pathway; D-glyceraldehyde 3-phosphate and beta-D-fructose 6-phosphate from D-ribose 5-phosphate and D-xylulose 5-phosphate (non-oxidative stage): step 2/3. In terms of biological role, transaldolase is important for the balance of metabolites in the pentose-phosphate pathway. This chain is Transaldolase, found in Edwardsiella ictaluri (strain 93-146).